Here is a 209-residue protein sequence, read N- to C-terminus: RNA chaperone ProQ (209 aa).

The segment at 101 to 155 is disordered; the sequence is LAESKAKVQARRKEQAQKAREEGKAKAKPAANKKPQQPRRTNKPKVQKPTKPVET. Over residues 111–125 the composition is skewed to basic and acidic residues; that stretch reads RRKEQAQKAREEGKA. The segment covering 136–148 has biased composition (basic residues); the sequence is QQPRRTNKPKVQK.

It belongs to the ProQ family.

The protein localises to the cytoplasm. RNA chaperone with significant RNA binding, RNA strand exchange and RNA duplexing activities. In Vibrio parahaemolyticus serotype O3:K6 (strain RIMD 2210633), this protein is RNA chaperone ProQ.